Reading from the N-terminus, the 608-residue chain is MSETLSNIVSKNMTNDKNSLESMNISSSSSAEENPKKQAKKXKERGPDPSANPFHLSGDVDFFLLRDQERNKALSERQQQKTMRVHEKMTYSSKVLAKHTSLRRQLQLEDKQEDLEARTEADHLRAFRDYNTWKLTLTKEKNVEPENMSGYLKQKRQMFLLQYTLDCKRREIQRLETLATKEEARLQQAEKSLAKDAALFDEFLRENDCSSVQAMKAAEKETKAKIEKILEIRDLTTQIVNIKSEISRFEDTLQHYKVYKDFLYKLSPKEWLEEQEKKHLFLKNAKEISEASKDGSVNSTPGDKGPGIKGKASSVWAKEGQGTKKPWRFLRLGRSLSYLSSPQQGSQPSESSGGNSRGSNSPIPLTQEDTDSDGEEPQLYFTEPQQLLDVFRELEEQNLSLIQNRQEMEETLEELSRTLKHTQIRMDREVNQLKQWVSTMMMSITKEEDTAAELELKARVFHFGEYKGDQQDKLLESLNWKVLDVYRNCIGTQQEANLGTVQMLTIIEHQLDELLENLERVPQVKIEQAERAKEKERRIRLREEKLQMQKILQEERLQRARARAQAEIKKKRGRTLVCRSQPPVHRIKQESEHTLMDKEKEELLFFFT.

Polar residues predominate over residues 1 to 17 (MSETLSNIVSKNMTNDK). The disordered stretch occupies residues 1-57 (MSETLSNIVSKNMTNDKNSLESMNISSSSSAEENPKKQAKKXKERGPDPSANPFHLS). Residues 20-32 (LESMNISSSSSAE) show a composition bias toward low complexity. 2 coiled-coil regions span residues 164 to 196 (TLDC…LAKD) and 230 to 257 (LEIR…QHYK). 2 disordered regions span residues 291–320 (ASKD…AKEG) and 339–377 (LSSP…GEEP). The span at 339-361 (LSSPQQGSQPSESSGGNSRGSNS) shows a compositional bias: low complexity. 2 coiled-coil regions span residues 385–435 (QQLL…QLKQ) and 500–575 (TVQM…RGRT).

The protein belongs to the CFAP100 family.

The protein resides in the cytoplasm. It is found in the cytoskeleton. Its subcellular location is the cilium axoneme. In terms of biological role, may play a role in ciliary/flagellar motility by regulating the assembly and the activity of axonemal inner dynein arm. In Macaca fascicularis (Crab-eating macaque), this protein is Cilia- and flagella-associated protein 100.